The following is a 62-amino-acid chain: Agnoprotein (62 aa).

Over 1–23 (MVLRRLSRQASVKVRRSWTESKK) the chain is Cytoplasmic. A helical; Signal-anchor for type II membrane protein membrane pass occupies residues 24 to 40 (TAQRLFVFVLELLLQFC). At 41 to 62 (EGEDTVDGKRKKPERLTEKPES) the chain is on the extracellular side.

Belongs to the polyomaviruses agnoprotein family. Homooligomer. Interacts with VP1. Interacts with large T antigen; this interaction may impact upon the activity of T-antigen on the control of viral gene transcription and replication. Interacts with small t antigen. Interacts with host CBX5; this interaction induces the dissociation of CBX5 from LBR, resulting in destabilization of the nuclear envelope. Phosphorylated by host kinase. Phosphorylation segregates agnoprotein in cytoplasm, whereas unphosphorylated agnoprotein migrate to the nucleus.

The protein resides in the host cytoplasm. It localises to the host nucleus membrane. It is found in the host rough endoplasmic reticulum membrane. Its subcellular location is the host cell membrane. Alters the structure of the nuclear envelope by interacting with host CBX5 and disrupting CBX5 association with LBR. Involved in the perinuclear-nuclear localization of the capsid protein VP1 during virion assembly and maturation. Plays an important role in the release of progeny virions from infected cells and in viral propagation, probably by acting as a viral ionic channel in the host plasma membrane. Allows influx of extracellular calcium ions in the host cell. May contribute to viral genome transcription and translation of viral late proteins. This is Agnoprotein from Simian virus 40 (SV40).